Here is a 371-residue protein sequence, read N- to C-terminus: Queuine tRNA-ribosyltransferase (371 aa).

D89 acts as the Proton acceptor in catalysis. Residues 89-93 (DSGGF), D143, Q185, and G212 each bind substrate. Residues 243–249 (GVGKPED) are RNA binding. The active-site Nucleophile is the D262. An RNA binding; important for wobble base 34 recognition region spans residues 267 to 271 (TRNAR). The Zn(2+) site is built by C300, C302, C305, and H331.

The protein belongs to the queuine tRNA-ribosyltransferase family. In terms of assembly, homodimer. Within each dimer, one monomer is responsible for RNA recognition and catalysis, while the other monomer binds to the replacement base PreQ1. Zn(2+) is required as a cofactor.

It catalyses the reaction 7-aminomethyl-7-carbaguanine + guanosine(34) in tRNA = 7-aminomethyl-7-carbaguanosine(34) in tRNA + guanine. Its pathway is tRNA modification; tRNA-queuosine biosynthesis. Its function is as follows. Catalyzes the base-exchange of a guanine (G) residue with the queuine precursor 7-aminomethyl-7-deazaguanine (PreQ1) at position 34 (anticodon wobble position) in tRNAs with GU(N) anticodons (tRNA-Asp, -Asn, -His and -Tyr). Catalysis occurs through a double-displacement mechanism. The nucleophile active site attacks the C1' of nucleotide 34 to detach the guanine base from the RNA, forming a covalent enzyme-RNA intermediate. The proton acceptor active site deprotonates the incoming PreQ1, allowing a nucleophilic attack on the C1' of the ribose to form the product. After dissociation, two additional enzymatic reactions on the tRNA convert PreQ1 to queuine (Q), resulting in the hypermodified nucleoside queuosine (7-(((4,5-cis-dihydroxy-2-cyclopenten-1-yl)amino)methyl)-7-deazaguanosine). This chain is Queuine tRNA-ribosyltransferase, found in Pseudomonas putida (strain ATCC 47054 / DSM 6125 / CFBP 8728 / NCIMB 11950 / KT2440).